The primary structure comprises 265 residues: tRNA pseudouridine synthase A (265 aa).

Catalysis depends on aspartate 55, which acts as the Nucleophile. Tyrosine 113 is a binding site for substrate.

This sequence belongs to the tRNA pseudouridine synthase TruA family. As to quaternary structure, homodimer.

It carries out the reaction uridine(38/39/40) in tRNA = pseudouridine(38/39/40) in tRNA. Formation of pseudouridine at positions 38, 39 and 40 in the anticodon stem and loop of transfer RNAs. The protein is tRNA pseudouridine synthase A of Levilactobacillus brevis (strain ATCC 367 / BCRC 12310 / CIP 105137 / JCM 1170 / LMG 11437 / NCIMB 947 / NCTC 947) (Lactobacillus brevis).